We begin with the raw amino-acid sequence, 291 residues long: 4-diphosphocytidyl-2-C-methyl-D-erythritol kinase (291 aa).

The active site involves K11. 97–107 (PVAAGIGGGSS) is an ATP binding site. D139 is a catalytic residue.

This sequence belongs to the GHMP kinase family. IspE subfamily.

The catalysed reaction is 4-CDP-2-C-methyl-D-erythritol + ATP = 4-CDP-2-C-methyl-D-erythritol 2-phosphate + ADP + H(+). Its pathway is isoprenoid biosynthesis; isopentenyl diphosphate biosynthesis via DXP pathway; isopentenyl diphosphate from 1-deoxy-D-xylulose 5-phosphate: step 3/6. Functionally, catalyzes the phosphorylation of the position 2 hydroxy group of 4-diphosphocytidyl-2C-methyl-D-erythritol. The sequence is that of 4-diphosphocytidyl-2-C-methyl-D-erythritol kinase from Methylorubrum extorquens (strain PA1) (Methylobacterium extorquens).